The primary structure comprises 72 residues: Threonine dehydratase operon activator protein (72 aa).

Its function is as follows. Probable trans-acting positive activator for the tdc operon. In Escherichia coli (strain K12), this protein is Threonine dehydratase operon activator protein (tdcR).